Reading from the N-terminus, the 689-residue chain is Pyocin-S2 (689 aa).

Zn(2+) contacts are provided by H656, H681, and H685.

It belongs to the colicin/pyosin nuclease family. As to quaternary structure, purified pyocin S2 makes up a complex of the two (large and small) proteins. The large protein, but not the pyocin complex, shows in vitro DNase activity.

In terms of biological role, causes breakdown of chromosomal DNA as well as complete inhibition of lipid synthesis in sensitive cells. This Pseudomonas aeruginosa (strain ATCC 15692 / DSM 22644 / CIP 104116 / JCM 14847 / LMG 12228 / 1C / PRS 101 / PAO1) protein is Pyocin-S2 (pys2).